Reading from the N-terminus, the 396-residue chain is Formate-dependent phosphoribosylglycinamide formyltransferase (396 aa).

N(1)-(5-phospho-beta-D-ribosyl)glycinamide contacts are provided by residues E25–L26 and E85. Residues R117, K158, S163–Q168, E198–I201, and E206 each bind ATP. The 190-residue stretch at R122–L311 folds into the ATP-grasp domain. Residues E270 and E282 each contribute to the Mg(2+) site. Residues D289, K359, and R366–R367 each bind N(1)-(5-phospho-beta-D-ribosyl)glycinamide.

It belongs to the PurK/PurT family. As to quaternary structure, homodimer.

The enzyme catalyses N(1)-(5-phospho-beta-D-ribosyl)glycinamide + formate + ATP = N(2)-formyl-N(1)-(5-phospho-beta-D-ribosyl)glycinamide + ADP + phosphate + H(+). Its pathway is purine metabolism; IMP biosynthesis via de novo pathway; N(2)-formyl-N(1)-(5-phospho-D-ribosyl)glycinamide from N(1)-(5-phospho-D-ribosyl)glycinamide (formate route): step 1/1. Involved in the de novo purine biosynthesis. Catalyzes the transfer of formate to 5-phospho-ribosyl-glycinamide (GAR), producing 5-phospho-ribosyl-N-formylglycinamide (FGAR). Formate is provided by PurU via hydrolysis of 10-formyl-tetrahydrofolate. The protein is Formate-dependent phosphoribosylglycinamide formyltransferase of Shewanella frigidimarina (strain NCIMB 400).